Here is a 1105-residue protein sequence, read N- to C-terminus: Integrator complex subunit 2 (1105 aa).

Residues 822–842 traverse the membrane as a helical segment; it reads FVFCSPYLLMILLRILKGSLA.

It belongs to the Integrator subunit 2 family. In terms of assembly, belongs to the multiprotein complex Integrator, at least composed of IntS1, IntS2, IntS3, IntS4, omd/IntS5, IntS6, defl/IntS7, IntS8, IntS9, IntS10, IntS11, IntS12, asun/IntS13, IntS14 and IntS15. The core complex associates with protein phosphatase 2A subunits mts/PP2A and Pp2A-29B, to form the Integrator-PP2A (INTAC) complex.

The protein resides in the nucleus membrane. The protein localises to the nucleus. Functionally, component of the integrator complex, a multiprotein complex that terminates RNA polymerase II (Pol II) transcription in the promoter-proximal region of genes. The integrator complex provides a quality checkpoint during transcription elongation by driving premature transcription termination of transcripts that are unfavorably configured for transcriptional elongation: the complex terminates transcription by (1) catalyzing dephosphorylation of the C-terminal domain (CTD) of Pol II subunit Polr2A/Rbp1 and Spt5, and (2) degrading the exiting nascent RNA transcript via endonuclease activity. The integrator complex is also involved in the 3'-end processing of the U7 snRNA, and also the spliceosomal snRNAs U1, U2, U4 and U5. The sequence is that of Integrator complex subunit 2 from Drosophila melanogaster (Fruit fly).